The chain runs to 235 residues: Purine nucleoside phosphorylase DeoD-type (235 aa).

Histidine 4 is a binding site for a purine D-ribonucleoside. Phosphate-binding positions include glycine 20, arginine 24, arginine 43, and 87 to 90; that span reads RVGT. A purine D-ribonucleoside contacts are provided by residues 179-181 and 203-204; these read EME and SD. The active-site Proton donor is aspartate 204.

The protein belongs to the PNP/UDP phosphorylase family. As to quaternary structure, homohexamer; trimer of homodimers.

It carries out the reaction a purine D-ribonucleoside + phosphate = a purine nucleobase + alpha-D-ribose 1-phosphate. The enzyme catalyses a purine 2'-deoxy-D-ribonucleoside + phosphate = a purine nucleobase + 2-deoxy-alpha-D-ribose 1-phosphate. Catalyzes the reversible phosphorolytic breakdown of the N-glycosidic bond in the beta-(deoxy)ribonucleoside molecules, with the formation of the corresponding free purine bases and pentose-1-phosphate. The sequence is that of Purine nucleoside phosphorylase DeoD-type from Exiguobacterium sibiricum (strain DSM 17290 / CCUG 55495 / CIP 109462 / JCM 13490 / 255-15).